Consider the following 632-residue polypeptide: Chaperone protein HtpG (632 aa).

An a; substrate-binding region spans residues 1-339 (MTQQTMSFQA…SSDLPLNVSR (339 aa)). The segment at 340–559 (EILQESRDVK…DNDMSGYLQR (220 aa)) is b. Positions 560–632 (MLKAAGQSAP…TNALLLSRAA (73 aa)) are c.

Belongs to the heat shock protein 90 family. Homodimer.

Its subcellular location is the cytoplasm. Molecular chaperone. Has ATPase activity. The protein is Chaperone protein HtpG of Burkholderia pseudomallei (strain 1106a).